Reading from the N-terminus, the 159-residue chain is Ribosomal RNA large subunit methyltransferase H (159 aa).

S-adenosyl-L-methionine contacts are provided by residues L76, G108, and F127–Y132.

The protein belongs to the RNA methyltransferase RlmH family. Homodimer.

It localises to the cytoplasm. The catalysed reaction is pseudouridine(1915) in 23S rRNA + S-adenosyl-L-methionine = N(3)-methylpseudouridine(1915) in 23S rRNA + S-adenosyl-L-homocysteine + H(+). Specifically methylates the pseudouridine at position 1915 (m3Psi1915) in 23S rRNA. The chain is Ribosomal RNA large subunit methyltransferase H from Enterococcus faecalis (strain ATCC 700802 / V583).